Here is a 226-residue protein sequence, read N- to C-terminus: tRNA (guanine-N(7)-)-methyltransferase (226 aa).

S-adenosyl-L-methionine-binding residues include Asp-59, Glu-84, and Asp-111. Residue Asp-169 participates in substrate binding.

Belongs to the class I-like SAM-binding methyltransferase superfamily. TrmB family.

It catalyses the reaction guanosine(46) in tRNA + S-adenosyl-L-methionine = N(7)-methylguanosine(46) in tRNA + S-adenosyl-L-homocysteine. Its pathway is tRNA modification; N(7)-methylguanine-tRNA biosynthesis. Catalyzes the formation of N(7)-methylguanine at position 46 (m7G46) in tRNA. The polypeptide is tRNA (guanine-N(7)-)-methyltransferase (Chloroherpeton thalassium (strain ATCC 35110 / GB-78)).